Consider the following 509-residue polypeptide: ATP synthase subunit alpha (509 aa).

Residue G169–T176 participates in ATP binding.

It belongs to the ATPase alpha/beta chains family. In terms of assembly, F-type ATPases have 2 components, CF(1) - the catalytic core - and CF(0) - the membrane proton channel. CF(1) has five subunits: alpha(3), beta(3), gamma(1), delta(1), epsilon(1). CF(0) has three main subunits: a(1), b(2) and c(9-12). The alpha and beta chains form an alternating ring which encloses part of the gamma chain. CF(1) is attached to CF(0) by a central stalk formed by the gamma and epsilon chains, while a peripheral stalk is formed by the delta and b chains.

It localises to the cell inner membrane. It carries out the reaction ATP + H2O + 4 H(+)(in) = ADP + phosphate + 5 H(+)(out). Its function is as follows. Produces ATP from ADP in the presence of a proton gradient across the membrane. The alpha chain is a regulatory subunit. The protein is ATP synthase subunit alpha of Rhizobium leguminosarum bv. trifolii (strain WSM2304).